The primary structure comprises 163 residues: Putative ribose 5-phosphate isomerase (163 aa).

16–17 (DD) serves as a coordination point for D-ribulose 5-phosphate. The Proton acceptor role is filled by C76. Residues 77 to 81 (GTGLG), N110, R120, and K148 contribute to the D-ribulose 5-phosphate site.

Belongs to the LacAB/RpiB family. Homodimer or homotetramer.

The sequence is that of Putative ribose 5-phosphate isomerase from Coccidioides immitis (strain RS) (Valley fever fungus).